The sequence spans 328 residues: Transcriptional regulator protein Pur-beta-B (328 aa).

Disordered regions lie at residues 1 to 35 (MADG…ELAS), 100 to 124 (SPEQ…RALK), and 289 to 328 (QERQ…VDDD). Ala-2 bears the N-acetylalanine mark. Residues 9-18 (ERGGSSGGPS) are compositionally biased toward gly residues. Residues 24–35 (MSREQETQELAS) show a composition bias toward basic and acidic residues. The interval 27–260 (EQETQELASK…LRVSEVKPSY (234 aa)) is DNA-binding. Basic and acidic residues predominate over residues 289 to 303 (QERQRDKMYDRRGPG). Residues 304–317 (ERGGSLGPGAGGGG) are compositionally biased toward gly residues. Residues 318–328 (DDSETEDVDDD) show a composition bias toward acidic residues.

Belongs to the PUR DNA-binding protein family.

It is found in the nucleus. Functionally, transcriptional regulator which can act as an activator or a repressor. This Xenopus laevis (African clawed frog) protein is Transcriptional regulator protein Pur-beta-B (purb-b).